We begin with the raw amino-acid sequence, 482 residues long: Glutamyl-tRNA(Gln) amidotransferase subunit A (482 aa).

Active-site charge relay system residues include K75 and S150. The active-site Acyl-ester intermediate is the S174.

The protein belongs to the amidase family. GatA subfamily. As to quaternary structure, heterotrimer of A, B and C subunits.

The catalysed reaction is L-glutamyl-tRNA(Gln) + L-glutamine + ATP + H2O = L-glutaminyl-tRNA(Gln) + L-glutamate + ADP + phosphate + H(+). Functionally, allows the formation of correctly charged Gln-tRNA(Gln) through the transamidation of misacylated Glu-tRNA(Gln) in organisms which lack glutaminyl-tRNA synthetase. The reaction takes place in the presence of glutamine and ATP through an activated gamma-phospho-Glu-tRNA(Gln). This is Glutamyl-tRNA(Gln) amidotransferase subunit A from Rippkaea orientalis (strain PCC 8801 / RF-1) (Cyanothece sp. (strain PCC 8801)).